Reading from the N-terminus, the 778-residue chain is Endonuclease MutS2 (778 aa).

328–335 (GPNTGGKT) is an ATP binding site. Residues 702–777 (LDLRGKRYEE…GSGATIVTFK (76 aa)) enclose the Smr domain.

It belongs to the DNA mismatch repair MutS family. MutS2 subfamily. As to quaternary structure, homodimer. Binds to stalled ribosomes, contacting rRNA.

Endonuclease that is involved in the suppression of homologous recombination and thus may have a key role in the control of bacterial genetic diversity. In terms of biological role, acts as a ribosome collision sensor, splitting the ribosome into its 2 subunits. Detects stalled/collided 70S ribosomes which it binds and splits by an ATP-hydrolysis driven conformational change. Acts upstream of the ribosome quality control system (RQC), a ribosome-associated complex that mediates the extraction of incompletely synthesized nascent chains from stalled ribosomes and their subsequent degradation. Probably generates substrates for RQC. This is Endonuclease MutS2 from Streptococcus pneumoniae serotype 2 (strain D39 / NCTC 7466).